Consider the following 74-residue polypeptide: DNA-directed RNA polymerase subunit omega (74 aa).

The protein belongs to the RNA polymerase subunit omega family. In terms of assembly, the RNAP catalytic core consists of 2 alpha, 1 beta, 1 beta' and 1 omega subunit. When a sigma factor is associated with the core the holoenzyme is formed, which can initiate transcription.

It carries out the reaction RNA(n) + a ribonucleoside 5'-triphosphate = RNA(n+1) + diphosphate. Its function is as follows. Promotes RNA polymerase assembly. Latches the N- and C-terminal regions of the beta' subunit thereby facilitating its interaction with the beta and alpha subunits. The chain is DNA-directed RNA polymerase subunit omega from Solidesulfovibrio magneticus (strain ATCC 700980 / DSM 13731 / RS-1) (Desulfovibrio magneticus).